Reading from the N-terminus, the 198-residue chain is MIEFVYPHTQLVAGVDEVGRGPLVGAVVTAAVILDPARPIAGLNDSKKLSEKRRLALCEEIKEKALSWSLGRAEPHEIDELNILHATMLAMQRAVAGLHIAPEYVLIDGNRCPKLPMPSMAVVKGDSRVPEISAASILAKVTRDAEMAALDIVFPQYGFAQHKGYPTAFHLEKLAEHGATEHHRRSFGPVKRALGLAS.

Positions 10-198 (QLVAGVDEVG…PVKRALGLAS (189 aa)) constitute an RNase H type-2 domain. Positions 16, 17, and 108 each coordinate a divalent metal cation.

The protein belongs to the RNase HII family. Mn(2+) serves as cofactor. Requires Mg(2+) as cofactor.

The protein resides in the cytoplasm. It carries out the reaction Endonucleolytic cleavage to 5'-phosphomonoester.. In terms of biological role, endonuclease that specifically degrades the RNA of RNA-DNA hybrids. The sequence is that of Ribonuclease HII from Escherichia coli O81 (strain ED1a).